The chain runs to 47 residues: uncharacterized protein (47 aa).

Positions 1-25 (MAHKCASAKLLSGIMALLFNGKSLL) are cleaved as a signal peptide.

This is an uncharacterized protein from Saccharomyces cerevisiae (strain ATCC 204508 / S288c) (Baker's yeast).